The chain runs to 321 residues: MKTAEAQAPAVDAVIFKKEKRKRLLIKLIQQKYLYLMILPGCIYFLLFKYVPMWGIVIAFQDYQPFLGILGSEWVGLKHFIRLFTEPTFFLLLKNTLVLFALNLAIFFPVPILLALLLNEVRIALFKKFVQTLIYIPHFMSWVIVVSLSFVLLTVDGGLINELIVFFGGEKINFLLNEEWFRPLYILQVIWREAGWSTIIYLAAITAVDPQLYEAAKMDGAGRLRQMWHITLPAIKSVIVVLLILKIGDTLELGFEHVYLLLNATNREVAEIFDTYVYTAGLKQGQFSYSTAVGVFKAAVGLILVMLANRLAKKFGEEGIY.

The region spanning 1 to 144 is the ABC transmembrane type-1 domain; the sequence is MKTAEAQAPA…YIPHFMSWVI (144 aa). The next 3 helical transmembrane spans lie at 21 to 41, 63 to 83, and 123 to 143; these read RKRL…ILPG, YQPF…FIRL, and IALF…MSWV.

Belongs to the binding-protein-dependent transport system permease family. The complex is probably composed of two ATP-binding proteins (MsmX), two transmembrane proteins (YtcP and YteP) and a solute-binding protein (YtcQ).

Its subcellular location is the cell membrane. Functionally, involved in pectin degradation. Part of the ABC transporter complex YtcQP-YteP involved in the uptake of polygalacturonan and rhamnogalacturonan type I. Responsible for the translocation of the substrate across the membrane. This Bacillus subtilis (strain 168) protein is Polygalacturonan/rhamnogalacturonan transport system permease protein YteP (yteP).